The sequence spans 363 residues: Protein EXORDIUM-like 5 (363 aa).

Positions 1 to 25 (MSSPATTITFFFFFTLSSFFYITSS) are cleaved as a signal peptide. Asn-144 carries an N-linked (GlcNAc...) asparagine glycan.

The protein belongs to the EXORDIUM family.

The protein resides in the secreted. It localises to the extracellular space. The protein localises to the apoplast. In terms of biological role, may play a role in a brassinosteroid-dependent regulation of growth and development. The protein is Protein EXORDIUM-like 5 (EXL5) of Arabidopsis thaliana (Mouse-ear cress).